The primary structure comprises 1010 residues: Importin-8 (1010 aa).

Residues 22-102 enclose the Importin N-terminal domain; that stretch reads AETELNQSYK…RDNIVEGIIR (81 aa). The span at 886 to 895 shows a compositional bias: basic and acidic residues; it reads NHSKAEKVDI. The interval 886-932 is disordered; the sequence is NHSKAEKVDIEENEEISSEEEEETSVSAQAMQSQIGRSEEEDDDDWD. Over residues 896-909 the composition is skewed to acidic residues; that stretch reads EENEEISSEEEEET. Phosphoserine is present on residues Ser902 and Ser903. The segment covering 910–921 has biased composition (polar residues); the sequence is SVSAQAMQSQIG.

Belongs to the importin beta family. Forms a heterodimer with KPNB1. Interacts with SRP19. Interacts with RPL23A. Binds directly to nuclear pore complexes. Interacts with LRPPRC; the interaction occurs when LRPPRC is in its RNA-free form and promotes import of LRPPRC to the nucleus to allow for EIF4E-mediated export of mRNAS from the nucleus to the cytoplasm.

It is found in the cytoplasm. The protein resides in the nucleus. Its function is as follows. Involved in nuclear protein import, either by acting as autonomous nuclear transport receptor or as an adapter-like protein in association with the importin-beta subunit KPNB1. Acting autonomously, may serve as receptor for nuclear localization signals (NLS) and promote translocation of import substrates through the nuclear pore complex (NPC) by an energy requiring, Ran-dependent mechanism. At the nucleoplasmic side of the NPC, Ran binds to importin, the importin/substrate complex dissociates and importin is re-exported from the nucleus to the cytoplasm where GTP hydrolysis releases Ran. The directionality of nuclear import is thought to be conferred by an asymmetric distribution of the GTP- and GDP-bound forms of Ran between the cytoplasm and nucleus. In vitro mediates the nuclear import of the signal recognition particle protein SRP19. May also be involved in cytoplasm-to-nucleus shuttling of a broad spectrum of other cargos, including Argonaute-microRNAs complexes, the JUN protein, RELA/NF-kappa-B p65 subunit, the translation initiation factor EIF4E and a set of receptor-activated mothers against decapentaplegic homolog (SMAD) transcription factors that play a critical role downstream of the large family of transforming growth factor beta and bone morphogenetic protein (BMP) cytokines. This chain is Importin-8, found in Mus musculus (Mouse).